We begin with the raw amino-acid sequence, 418 residues long: Gamma-glutamyl phosphate reductase (418 aa).

This sequence belongs to the gamma-glutamyl phosphate reductase family.

Its subcellular location is the cytoplasm. It catalyses the reaction L-glutamate 5-semialdehyde + phosphate + NADP(+) = L-glutamyl 5-phosphate + NADPH + H(+). It participates in amino-acid biosynthesis; L-proline biosynthesis; L-glutamate 5-semialdehyde from L-glutamate: step 2/2. In terms of biological role, catalyzes the NADPH-dependent reduction of L-glutamate 5-phosphate into L-glutamate 5-semialdehyde and phosphate. The product spontaneously undergoes cyclization to form 1-pyrroline-5-carboxylate. This Clostridium acetobutylicum (strain ATCC 824 / DSM 792 / JCM 1419 / IAM 19013 / LMG 5710 / NBRC 13948 / NRRL B-527 / VKM B-1787 / 2291 / W) protein is Gamma-glutamyl phosphate reductase.